A 91-amino-acid polypeptide reads, in one-letter code: Small ribosomal subunit protein uS19 (91 aa).

Belongs to the universal ribosomal protein uS19 family.

Protein S19 forms a complex with S13 that binds strongly to the 16S ribosomal RNA. This is Small ribosomal subunit protein uS19 from Exiguobacterium sp. (strain ATCC BAA-1283 / AT1b).